Consider the following 111-residue polypeptide: SPbeta prophage-derived uncharacterized protein YopW (111 aa).

This chain is SPbeta prophage-derived uncharacterized protein YopW (yopW), found in Bacillus subtilis (strain 168).